Here is a 186-residue protein sequence, read N- to C-terminus: Pyridoxal 5'-phosphate synthase subunit PdxT (186 aa).

Position 47–49 (47–49) interacts with L-glutamine; the sequence is GES. The Nucleophile role is filled by Cys76. L-glutamine-binding positions include Arg102 and 130–131; that span reads IR. Catalysis depends on charge relay system residues His166 and Glu168.

The protein belongs to the glutaminase PdxT/SNO family. In terms of assembly, in the presence of PdxS, forms a dodecamer of heterodimers. Only shows activity in the heterodimer.

It catalyses the reaction aldehydo-D-ribose 5-phosphate + D-glyceraldehyde 3-phosphate + L-glutamine = pyridoxal 5'-phosphate + L-glutamate + phosphate + 3 H2O + H(+). The enzyme catalyses L-glutamine + H2O = L-glutamate + NH4(+). The protein operates within cofactor biosynthesis; pyridoxal 5'-phosphate biosynthesis. Catalyzes the hydrolysis of glutamine to glutamate and ammonia as part of the biosynthesis of pyridoxal 5'-phosphate. The resulting ammonia molecule is channeled to the active site of PdxS. The protein is Pyridoxal 5'-phosphate synthase subunit PdxT of Staphylococcus epidermidis (strain ATCC 35984 / DSM 28319 / BCRC 17069 / CCUG 31568 / BM 3577 / RP62A).